We begin with the raw amino-acid sequence, 435 residues long: MNIERADFVDRVKIFVKAGDGGNGCVSFRREKYVPKGGPDGGDGGDGGFVFLRANPSVSTLIEFVNKRKFVAENGKHGMGKKMKGRNGKDLFIDVPVGTVVKDAVTGEIIADLNEPGKIVCVARGGKGGRGNAHFATSTKQAPLIAERGEKGESRWLELELKILADVGLVGYPNVGKSSLISRISNARPKIANYPFTTLIPNLGVVKYDDFSFVVADIPGLIEGASEGVGLGNVFLRHVERCYLIAHVIDVSGYEREDPVRDYFVIREEMKKYSPFLLEKPEIVVANKIDLIGKEELEKILKRLRDATDREVIPVSAVTGEGIDLLVSKLASIVREMKVEKPERKEERFVKPSPVWRRLPEKFHLEVVKEDEGYWVVEGENLRVWIERFDLNQRDARLMLLQVLEKNGLNNKLKEAGVKEGDVVRIGDFEFEYRE.

Positions 6-164 (ADFVDRVKIF…RWLELELKIL (159 aa)) constitute an Obg domain. Positions 165 to 335 (ADVGLVGYPN…LVSKLASIVR (171 aa)) constitute an OBG-type G domain. GTP is bound by residues 171 to 178 (GYPNVGKS), 196 to 200 (FTTLI), 217 to 220 (DIPG), 287 to 290 (NKID), and 316 to 318 (SAV). Serine 178 and threonine 198 together coordinate Mg(2+). In terms of domain architecture, OCT spans 357-435 (RRLPEKFHLE…IGDFEFEYRE (79 aa)).

The protein belongs to the TRAFAC class OBG-HflX-like GTPase superfamily. OBG GTPase family. In terms of assembly, monomer. Mg(2+) serves as cofactor.

It is found in the cytoplasm. An essential GTPase which binds GTP, GDP and possibly (p)ppGpp with moderate affinity, with high nucleotide exchange rates and a fairly low GTP hydrolysis rate. Plays a role in control of the cell cycle, stress response, ribosome biogenesis and in those bacteria that undergo differentiation, in morphogenesis control. The protein is GTPase Obg of Thermotoga petrophila (strain ATCC BAA-488 / DSM 13995 / JCM 10881 / RKU-1).